Here is a 113-residue protein sequence, read N- to C-terminus: Colicin-E1* immunity protein (113 aa).

Its function is as follows. This protein is able to protect a cell, which harbors the plasmid pKY-1 encoding colicin E1*, against colicin E1*. The protein is Colicin-E1* immunity protein (imm) of Shigella sonnei.